A 100-amino-acid polypeptide reads, in one-letter code: Large ribosomal subunit protein eL36B (100 aa).

The protein belongs to the eukaryotic ribosomal protein eL36 family. As to quaternary structure, component of the large ribosomal subunit (LSU). Mature yeast ribosomes consist of a small (40S) and a large (60S) subunit. The 40S small subunit contains 1 molecule of ribosomal RNA (18S rRNA) and 33 different proteins (encoded by 57 genes). The large 60S subunit contains 3 rRNA molecules (25S, 5.8S and 5S rRNA) and 46 different proteins (encoded by 81 genes).

The protein localises to the cytoplasm. Component of the ribosome, a large ribonucleoprotein complex responsible for the synthesis of proteins in the cell. The small ribosomal subunit (SSU) binds messenger RNAs (mRNAs) and translates the encoded message by selecting cognate aminoacyl-transfer RNA (tRNA) molecules. The large subunit (LSU) contains the ribosomal catalytic site termed the peptidyl transferase center (PTC), which catalyzes the formation of peptide bonds, thereby polymerizing the amino acids delivered by tRNAs into a polypeptide chain. The nascent polypeptides leave the ribosome through a tunnel in the LSU and interact with protein factors that function in enzymatic processing, targeting, and the membrane insertion of nascent chains at the exit of the ribosomal tunnel. The chain is Large ribosomal subunit protein eL36B from Saccharomyces cerevisiae (strain ATCC 204508 / S288c) (Baker's yeast).